The primary structure comprises 155 residues: Ribonuclease H (155 aa).

The 142-residue stretch at 9–150 folds into the RNase H type-1 domain; that stretch reads DGQQVEMWTD…ADALANQGME (142 aa). Asp18, Glu56, Asp78, and Asp142 together coordinate Mg(2+).

The protein belongs to the RNase H family. In terms of assembly, monomer. The cofactor is Mg(2+).

It is found in the cytoplasm. The enzyme catalyses Endonucleolytic cleavage to 5'-phosphomonoester.. Endonuclease that specifically degrades the RNA of RNA-DNA hybrids. The chain is Ribonuclease H from Bordetella pertussis (strain Tohama I / ATCC BAA-589 / NCTC 13251).